Here is a 227-residue protein sequence, read N- to C-terminus: MMLHIPQVLSKAKVAELRALIDAAPWVDGNETSGTQSALAKRNAQLPEGSPAATQAGEAILDALERNPLFVAAALPQVVFPPLFNRYAGGEAFGLHVDNSIRQSRDGRTRIRSDLSATLFLTEPEDYDGGVLVVEDTFGAHEVKLPAGDMILYPASSLHEVTPVTRGARVCSFFWIQSLVREDARRELLFQMDLAIQQLGARIGADAPELVSLTGGYHNLLRMWAEV.

In terms of domain architecture, Fe2OG dioxygenase spans 78–178; that stretch reads VVFPPLFNRY…RVCSFFWIQS (101 aa). Residues histidine 96, aspartate 98, and histidine 159 each contribute to the Fe cation site. Arginine 169 serves as a coordination point for 2-oxoglutarate.

The cofactor is Fe(2+). L-ascorbate serves as cofactor.

This Phenylobacterium zucineum (strain HLK1) protein is PKHD-type hydroxylase PHZ_c0292.